We begin with the raw amino-acid sequence, 594 residues long: Interactor of HORMAD1 protein 1 (594 aa).

Coiled-coil stretches lie at residues 109–135 (VGKS…SETL), 165–189 (QSIL…NDLV), and 219–245 (EMKS…CEQL). Residues 434–443 (VEMRGKDKKQ) show a composition bias toward basic and acidic residues. The segment at 434–454 (VEMRGKDKKQQPRKAHRAHRG) is disordered. Residues 444–454 (QPRKAHRAHRG) are compositionally biased toward basic residues. A phosphoserine mark is found at serine 588 and serine 589.

Part of the MCD recombinosome complex, at least composed of IHO1, REC114 and MEI4. Interacts with REC114. Interacts with MEI4. Interacts with HORMAD1. Interacts with ANKRD31.

The protein localises to the chromosome. In terms of biological role, required for DNA double-strand breaks (DSBs) formation in unsynapsed regions during meiotic recombination. Probably acts by forming a complex with MEI4 and REC114, which activates DSBs formation in unsynapsed regions, an essential step to ensure completion of synapsis. Not required for HORMAD1 functions in pairing-independent synaptonemal complex formation, ATR recruitment to unsynapsed axes, meiotic silencing of unsynapsed chromatin (MSUC) or meiotic surveillance. The chain is Interactor of HORMAD1 protein 1 from Homo sapiens (Human).